A 388-amino-acid polypeptide reads, in one-letter code: Proteasomal ubiquitin receptor ADRM1 homolog rpn1302 (388 aa).

The 118-residue stretch at 15 to 132 folds into the Pru domain; the sequence is RGKYGLVSVK…SLINQLIADP (118 aa). Disordered stretches follow at residues 202 to 227 and 368 to 388; these read RASS…EEAT and SDGE…EKDE. A compositionally biased stretch (acidic residues) spans 368–377; sequence SDGEVEEEGD. Residues 378-388 are compositionally biased toward basic and acidic residues; sequence VEMRESNEKDE.

Belongs to the ADRM1 family. In terms of assembly, component of the 19S proteasome regulatory particle complex. The 2 S.pombe rpn13 homologs, rpn1301 and rpn1302 are present at a 0.2-1 ratio.

The protein resides in the cytoplasm. The protein localises to the nucleus. Component of the 26S proteasome, a multiprotein complex involved in the ATP-dependent degradation of ubiquitinated proteins. This complex plays a key role in the maintenance of protein homeostasis by removing misfolded or damaged proteins, which could impair cellular functions, and by removing proteins whose functions are no longer required. Therefore, the proteasome participates in numerous cellular processes, including cell cycle progression, apoptosis, or DNA damage repair. Within the complex, functions as a proteasomal ubiquitin receptor. This chain is Proteasomal ubiquitin receptor ADRM1 homolog rpn1302 (rpn1302), found in Schizosaccharomyces pombe (strain 972 / ATCC 24843) (Fission yeast).